Reading from the N-terminus, the 853-residue chain is Translation initiation factor IF-2 (853 aa).

Disordered regions lie at residues Met-1–Gly-68 and Leu-94–Ser-265. The segment covering Arg-20 to His-32 has biased composition (polar residues). Positions Leu-94 to Ser-161 are enriched in basic and acidic residues. Over residues Ala-163–Ala-176 the composition is skewed to low complexity. Composition is skewed to basic and acidic residues over residues Pro-196–Arg-219 and Arg-245–Ser-265. Residues Pro-347–Glu-515 form the tr-type G domain. A G1 region spans residues Gly-356–Thr-363. Residue Gly-356–Thr-363 coordinates GTP. Residues Gly-381–His-385 are G2. The tract at residues Asp-403–Gly-406 is G3. GTP is bound by residues Asp-403–His-407 and Thr-457–Asp-460. Positions Thr-457 to Asp-460 are G4. The interval Ser-493 to Lys-495 is G5.

Belongs to the TRAFAC class translation factor GTPase superfamily. Classic translation factor GTPase family. IF-2 subfamily.

It localises to the cytoplasm. Functionally, one of the essential components for the initiation of protein synthesis. Protects formylmethionyl-tRNA from spontaneous hydrolysis and promotes its binding to the 30S ribosomal subunits. Also involved in the hydrolysis of GTP during the formation of the 70S ribosomal complex. The polypeptide is Translation initiation factor IF-2 (Hyphomonas neptunium (strain ATCC 15444)).